The sequence spans 315 residues: Probable cell division protein WhiA (315 aa).

A DNA-binding region (H-T-H motif) is located at residues 280 to 313 (SLKELGDLLDPPLSKSGVAYRMRKLEESVKEILQ).

This sequence belongs to the WhiA family.

Its function is as follows. Involved in cell division and chromosome segregation. The polypeptide is Probable cell division protein WhiA (Syntrophomonas wolfei subsp. wolfei (strain DSM 2245B / Goettingen)).